The sequence spans 1098 residues: Sister-chromatid cohesion protein 3 (1098 aa).

The tract at residues 1–68 (MEDSPQGLKR…RSRTHPPQQN (68 aa)) is disordered. Positions 245–265 (RVDSLNKRLSVTHEQITTLED) form a coiled coil. One can recognise an SCD domain in the interval 275 to 360 (FVHRYRDIDN…QRFSNRMIEM (86 aa)). Coiled-coil stretches lie at residues 632–653 (KLKDLEDELLDKITSAIREVKD), 888–908 (LESLKRAYHRYSSELSSGREE), and 1009–1032 (LETLEEKCLKNEDLQDDKEAANVR). A disordered region spans residues 1027–1077 (EAANVRRRGRPRKRPETERKRLFDEQSGSDEDESISGGSDREDKLDEDAPL). The segment covering 1040–1050 (RPETERKRLFD) has biased composition (basic and acidic residues).

The protein belongs to the SCC3 family. As to quaternary structure, part of the cohesin complex. Interacts with DEK3. Expressed in roots, mature leaves, buds and seedlings.

The protein localises to the nucleus. It is found in the chromosome. In terms of biological role, essential component of cohesin complex, a complex required for the cohesion of sister chromatids after DNA replication. The cohesin complex apparently forms a large proteinaceous ring within which sister chromatids can be trapped. At anaphase, the complex is cleaved and dissociates from chromatin, allowing sister chromatids to segregate. The cohesin complex may also play a role in spindle pole assembly during mitosis. Required for centromere cohesion maintenance at anaphase I and for the monopolar orientation of the kinetochores during both male and female meiosis. Also involved in mitosis. The chain is Sister-chromatid cohesion protein 3 from Arabidopsis thaliana (Mouse-ear cress).